Reading from the N-terminus, the 125-residue chain is Larval cuticle protein LCP-14 (125 aa).

Positions 1-16 (MKSFIVALCVVGCVLA) are cleaved as a signal peptide. In terms of domain architecture, Chitin-binding type R&amp;R spans 33–102 (EGSYNYAFES…PQADFLPTPP (70 aa)).

Functionally, component of the cuticle of the larva of tobacco hornworm. In Manduca sexta (Tobacco hawkmoth), this protein is Larval cuticle protein LCP-14 (LCP-14).